We begin with the raw amino-acid sequence, 263 residues long: 3-methyl-2-oxobutanoate hydroxymethyltransferase (263 aa).

The Mg(2+) site is built by D43 and D82. 3-methyl-2-oxobutanoate-binding positions include 43-44 (DS), D82, and K111. E113 lines the Mg(2+) pocket. Catalysis depends on E179, which acts as the Proton acceptor.

This sequence belongs to the PanB family. In terms of assembly, homodecamer; pentamer of dimers. The cofactor is Mg(2+).

The protein localises to the cytoplasm. The enzyme catalyses 3-methyl-2-oxobutanoate + (6R)-5,10-methylene-5,6,7,8-tetrahydrofolate + H2O = 2-dehydropantoate + (6S)-5,6,7,8-tetrahydrofolate. It functions in the pathway cofactor biosynthesis; (R)-pantothenate biosynthesis; (R)-pantoate from 3-methyl-2-oxobutanoate: step 1/2. Its function is as follows. Catalyzes the reversible reaction in which hydroxymethyl group from 5,10-methylenetetrahydrofolate is transferred onto alpha-ketoisovalerate to form ketopantoate. The protein is 3-methyl-2-oxobutanoate hydroxymethyltransferase of Neisseria meningitidis serogroup B (strain ATCC BAA-335 / MC58).